A 321-amino-acid polypeptide reads, in one-letter code: Ferredoxin--NADP reductase (321 aa).

The FAD site is built by Glu33, Gln41, Tyr46, Val86, Leu119, Asp277, and Ser318.

This sequence belongs to the ferredoxin--NADP reductase type 2 family. Homodimer. FAD is required as a cofactor.

The catalysed reaction is 2 reduced [2Fe-2S]-[ferredoxin] + NADP(+) + H(+) = 2 oxidized [2Fe-2S]-[ferredoxin] + NADPH. In Lactococcus lactis subsp. cremoris (strain MG1363), this protein is Ferredoxin--NADP reductase.